A 459-amino-acid polypeptide reads, in one-letter code: MLFLLFLLVAPIYAGLILPTKPSNDPFYNAPAGFEKAAVGEILQSRKTPKPITGVFVPVKIQNSWQLLVRSEDSFGNPNVIVTTVMEPFNADPSKLASYQVFEDSAKADCAPSYALQFGSDVTTIATQVETYLLAPLLDQGYYVVSPDYEGPKSTFTVGKQSGQAVLNSIRAALKSGKITNLAEDAKVVMWGYSGGSLASGWAAALQPNYAPELGGNLLGAALGGFVTNITATAEATDGTVFAGIMANALGGVANEYPEFKQILQNDTDKQSVFDQFDNHCLADGVINYIGKHFLSGTNKIFKSGWNILKNPTISKIVEDNGLVYQKQLVPKIPILIYHGAIDQIVPIVNVKKTYQNWCDAGIASLEFSEDATNGHITETIVGAPVALTWIINRFNGKQTVSGCQHVKRTSNFEYPNIPPSILNYFKAALNILIQKGLGPDIQKDQVNPDGLKKIPILV.

The first 14 residues, 1–14, serve as a signal peptide directing secretion; it reads MLFLLFLLVAPIYA. Cysteines 110 and 281 form a disulfide. The active-site Charge relay system is the S194. N229 and N266 each carry an N-linked (GlcNAc...) asparagine glycan. Residues D343 and H376 each act as charge relay system in the active site. A disulfide bridge connects residues C359 and C404.

This sequence belongs to the AB hydrolase superfamily. Lipase family. Class Lip subfamily.

It is found in the secreted. It carries out the reaction a triacylglycerol + H2O = a diacylglycerol + a fatty acid + H(+). Its function is as follows. Secreted lipase that is able to hydrolyze both the neutral triacylglycerols and the monopalmitate ester Tween 40, allowing the use of hydrolyzed products as carbon sources. Has broad lipolytic activity, which may be important for colonization and subsequent infection, therefore contributing to the persistence and virulence in human tissue. This is Lipase 4 from Candida albicans (strain SC5314 / ATCC MYA-2876) (Yeast).